We begin with the raw amino-acid sequence, 343 residues long: Labda-7,13(16),14-triene synthase (343 aa).

Mg(2+) contacts are provided by Asp114 and Glu119. The DDXXXE motif motif lies at 114–119 (DDVHVE). A substrate-binding site is contributed by Arg206. Positions 252, 256, and 260 each coordinate Mg(2+). The NXXXSXXXE motif motif lies at 252-260 (NDLYSFAYE).

It belongs to the terpene synthase family. It depends on Mg(2+) as a cofactor.

It catalyses the reaction (13E)-labda-7,13-dien-15-yl diphosphate = labda-7,13(16),14-triene + diphosphate. Functionally, involved in the biosynthesis of the labdane-type bicyclic diterpene labda-7,13(16),14-triene. Catalyzes the conversion of labda-7,13(E)-dienyl diphosphate to yield labda-7,13(16),14-triene. In Streptomyces clavuligerus, this protein is Labda-7,13(16),14-triene synthase.